Here is a 340-residue protein sequence, read N- to C-terminus: Serpentine receptor class alpha-18 (340 aa).

6 consecutive transmembrane segments (helical) span residues 29–49, 109–129, 149–169, 198–218, 249–269, and 285–305; these read FNFI…WLAI, VFEL…VFSL, FIAT…FYIV, VRTG…YVCV, ISIV…NLLI, and IVSF…VIYF.

Belongs to the nematode receptor-like protein sra family.

Its subcellular location is the membrane. The chain is Serpentine receptor class alpha-18 (sra-18) from Caenorhabditis elegans.